Consider the following 139-residue polypeptide: Large ribosomal subunit protein uL16c (139 aa).

The protein belongs to the universal ribosomal protein uL16 family. As to quaternary structure, part of the 50S ribosomal subunit.

The protein resides in the plastid. The protein localises to the chloroplast. The chain is Large ribosomal subunit protein uL16c from Cryptomeria japonica (Japanese cedar).